Reading from the N-terminus, the 202-residue chain is GTP cyclohydrolase 1 (202 aa).

Cys90, His93, and Cys163 together coordinate Zn(2+).

Belongs to the GTP cyclohydrolase I family. In terms of assembly, homomer.

The enzyme catalyses GTP + H2O = 7,8-dihydroneopterin 3'-triphosphate + formate + H(+). The protein operates within cofactor biosynthesis; 7,8-dihydroneopterin triphosphate biosynthesis; 7,8-dihydroneopterin triphosphate from GTP: step 1/1. This chain is GTP cyclohydrolase 1, found in Mycobacterium marinum (strain ATCC BAA-535 / M).